Reading from the N-terminus, the 93-residue chain is MITTLIIIGAAFLVGPRTFKFVLAYLLGYYNAFGPPLQIVQFMVWLIIIYFPKKFFSLGWYFCHDAFSSYFGDPNGGQLPVSTKFHSLTDMID.

Transmembrane regions (helical) follow at residues 5 to 25 (LIII…VLAY) and 32 to 52 (AFGP…IYFP).

It is found in the membrane. This is Small hydrophobic protein from Tupaia virus (isolate Tupaia/Thailand/-/1986) (TUPV).